A 1177-amino-acid chain; its full sequence is Transcription-repair-coupling factor (1177 aa).

The Helicase ATP-binding domain maps to 638–799; the sequence is DMERERPMDR…MLGVRDLSVI (162 aa). Position 651 to 658 (651 to 658) interacts with ATP; it reads GDVGYGKT. Residues 752–755 carry the DEEQ box motif; that stretch reads DEEQ. The region spanning 820–974 is the Helicase C-terminal domain; it reads LVREAIEREL…GFKIAMRDLT (155 aa).

It in the N-terminal section; belongs to the UvrB family. In the C-terminal section; belongs to the helicase family. RecG subfamily.

Its subcellular location is the cytoplasm. Its function is as follows. Couples transcription and DNA repair by recognizing RNA polymerase (RNAP) stalled at DNA lesions. Mediates ATP-dependent release of RNAP and its truncated transcript from the DNA, and recruitment of nucleotide excision repair machinery to the damaged site. Probably required to repair non-bulky DNA lesions. The chain is Transcription-repair-coupling factor from Bacillus subtilis (strain 168).